Reading from the N-terminus, the 82-residue chain is DNA-directed RNA polymerase subunit Rpo5 (82 aa).

It belongs to the archaeal Rpo5/eukaryotic RPB5 RNA polymerase subunit family. In terms of assembly, part of the RNA polymerase complex.

The protein resides in the cytoplasm. It carries out the reaction RNA(n) + a ribonucleoside 5'-triphosphate = RNA(n+1) + diphosphate. Functionally, DNA-dependent RNA polymerase (RNAP) catalyzes the transcription of DNA into RNA using the four ribonucleoside triphosphates as substrates. The polypeptide is DNA-directed RNA polymerase subunit Rpo5 (Thermococcus onnurineus (strain NA1)).